The sequence spans 180 residues: Shikimate kinase (180 aa).

14–19 (GAGKSS) lines the ATP pocket. S18 serves as a coordination point for Mg(2+). 3 residues coordinate substrate: D36, R60, and G82. Residue R120 participates in ATP binding. A substrate-binding site is contributed by R139.

Belongs to the shikimate kinase family. In terms of assembly, monomer. The cofactor is Mg(2+).

It is found in the cytoplasm. The catalysed reaction is shikimate + ATP = 3-phosphoshikimate + ADP + H(+). Its pathway is metabolic intermediate biosynthesis; chorismate biosynthesis; chorismate from D-erythrose 4-phosphate and phosphoenolpyruvate: step 5/7. Functionally, catalyzes the specific phosphorylation of the 3-hydroxyl group of shikimic acid using ATP as a cosubstrate. The polypeptide is Shikimate kinase (Xylella fastidiosa (strain M23)).